We begin with the raw amino-acid sequence, 426 residues long: Serine--tRNA ligase (426 aa).

Residue 231 to 233 (TAE) participates in L-serine binding. 262 to 264 (RSE) provides a ligand contact to ATP. Residue glutamate 285 participates in L-serine binding. ATP is bound at residue 349–352 (EISS). Position 385 (serine 385) interacts with L-serine.

Belongs to the class-II aminoacyl-tRNA synthetase family. Type-1 seryl-tRNA synthetase subfamily. Homodimer. The tRNA molecule binds across the dimer.

The protein resides in the cytoplasm. It catalyses the reaction tRNA(Ser) + L-serine + ATP = L-seryl-tRNA(Ser) + AMP + diphosphate + H(+). The enzyme catalyses tRNA(Sec) + L-serine + ATP = L-seryl-tRNA(Sec) + AMP + diphosphate + H(+). The protein operates within aminoacyl-tRNA biosynthesis; selenocysteinyl-tRNA(Sec) biosynthesis; L-seryl-tRNA(Sec) from L-serine and tRNA(Sec): step 1/1. In terms of biological role, catalyzes the attachment of serine to tRNA(Ser). Is also able to aminoacylate tRNA(Sec) with serine, to form the misacylated tRNA L-seryl-tRNA(Sec), which will be further converted into selenocysteinyl-tRNA(Sec). This Teredinibacter turnerae (strain ATCC 39867 / T7901) protein is Serine--tRNA ligase.